We begin with the raw amino-acid sequence, 360 residues long: S-adenosylmethionine:tRNA ribosyltransferase-isomerase (360 aa).

It belongs to the QueA family. In terms of assembly, monomer.

The protein localises to the cytoplasm. It catalyses the reaction 7-aminomethyl-7-carbaguanosine(34) in tRNA + S-adenosyl-L-methionine = epoxyqueuosine(34) in tRNA + adenine + L-methionine + 2 H(+). It functions in the pathway tRNA modification; tRNA-queuosine biosynthesis. Its function is as follows. Transfers and isomerizes the ribose moiety from AdoMet to the 7-aminomethyl group of 7-deazaguanine (preQ1-tRNA) to give epoxyqueuosine (oQ-tRNA). This chain is S-adenosylmethionine:tRNA ribosyltransferase-isomerase, found in Burkholderia pseudomallei (strain 1106a).